We begin with the raw amino-acid sequence, 127 residues long: Arginine decarboxylase proenzyme (127 aa).

Residue Ser72 is the Schiff-base intermediate with substrate; via pyruvic acid of the active site. Ser72 is modified (pyruvic acid (Ser); by autocatalysis). The active-site Proton acceptor; for processing activity is His77. The Proton donor; for catalytic activity role is filled by Cys92.

The protein belongs to the prokaryotic AdoMetDC family. Type 1 subfamily. Heterooctamer of four alpha and four beta chains arranged as a tetramer of alpha/beta heterodimers. The cofactor is pyruvate. Is synthesized initially as an inactive proenzyme. Formation of the active enzyme involves a self-maturation process in which the active site pyruvoyl group is generated from an internal serine residue via an autocatalytic post-translational modification. Two non-identical subunits are generated from the proenzyme in this reaction, and the pyruvate is formed at the N-terminus of the alpha chain, which is derived from the carboxyl end of the proenzyme. The post-translation cleavage follows an unusual pathway, termed non-hydrolytic serinolysis, in which the side chain hydroxyl group of the serine supplies its oxygen atom to form the C-terminus of the beta chain, while the remainder of the serine residue undergoes an oxidative deamination to produce ammonia and the pyruvoyl group blocking the N-terminus of the alpha chain.

The catalysed reaction is L-arginine + H(+) = agmatine + CO2. The protein operates within amine and polyamine biosynthesis; agmatine biosynthesis; agmatine from L-arginine: step 1/1. Functionally, specifically catalyzes the decarboxylation of L-arginine to agmatine. Has no S-adenosylmethionine decarboxylase (AdoMetDC) activity. This is Arginine decarboxylase proenzyme from Staphylothermus marinus (strain ATCC 43588 / DSM 3639 / JCM 9404 / F1).